Reading from the N-terminus, the 321-residue chain is MSKPIVMERGVKYRDADKMALIPVKNVVTEREALLRKPEWMKIKLPADSTRIQGIKAAMRKNGLHSVCEEASCPNLAECFNHGTATFMILGAICTRRCPFCDVAHGRPVAPDANEPVKLAQTIADMALRYVVITSVDRDDLRDGGAQHFADCITAIREKSPSIKIETLVPDFRGRMDRALDILTATPPDVFNHNLENVPRIYRQVRPGADYNWSLKLLERFKEAHPEIPTKSGLMVGLGETNEEIIEVMRDLRRHGVTMLTLGQYLQPSRHHLPVQRYVSPDEFEEMKAEALAMGFTHAACGPFVRSSYHADLQAKGIEVK.

[4Fe-4S] cluster-binding residues include C68, C73, C79, C94, C98, C101, and S308. A Radical SAM core domain is found at 80–297; sequence FNHGTATFMI…KAEALAMGFT (218 aa).

Belongs to the radical SAM superfamily. Lipoyl synthase family. The cofactor is [4Fe-4S] cluster.

The protein localises to the cytoplasm. It catalyses the reaction [[Fe-S] cluster scaffold protein carrying a second [4Fe-4S](2+) cluster] + N(6)-octanoyl-L-lysyl-[protein] + 2 oxidized [2Fe-2S]-[ferredoxin] + 2 S-adenosyl-L-methionine + 4 H(+) = [[Fe-S] cluster scaffold protein] + N(6)-[(R)-dihydrolipoyl]-L-lysyl-[protein] + 4 Fe(3+) + 2 hydrogen sulfide + 2 5'-deoxyadenosine + 2 L-methionine + 2 reduced [2Fe-2S]-[ferredoxin]. It participates in protein modification; protein lipoylation via endogenous pathway; protein N(6)-(lipoyl)lysine from octanoyl-[acyl-carrier-protein]: step 2/2. Functionally, catalyzes the radical-mediated insertion of two sulfur atoms into the C-6 and C-8 positions of the octanoyl moiety bound to the lipoyl domains of lipoate-dependent enzymes, thereby converting the octanoylated domains into lipoylated derivatives. In Escherichia fergusonii (strain ATCC 35469 / DSM 13698 / CCUG 18766 / IAM 14443 / JCM 21226 / LMG 7866 / NBRC 102419 / NCTC 12128 / CDC 0568-73), this protein is Lipoyl synthase.